Here is a 243-residue protein sequence, read N- to C-terminus: DNA repair protein RecO (243 aa).

It belongs to the RecO family.

In terms of biological role, involved in DNA repair and RecF pathway recombination. The polypeptide is DNA repair protein RecO (Geobacter sulfurreducens (strain ATCC 51573 / DSM 12127 / PCA)).